Here is a 507-residue protein sequence, read N- to C-terminus: Tryptamine 4-monooxygenase (507 aa).

An N-terminal signal peptide occupies residues 1–19 (MIVLLVSLVLAGCIYYANA). The interval 403–425 (PNPSEFRPERYLSSDGKPDPTVR) is disordered. The segment covering 408-425 (FRPERYLSSDGKPDPTVR) has biased composition (basic and acidic residues). C439 provides a ligand contact to heme.

It belongs to the cytochrome P450 family. The cofactor is heme.

The catalysed reaction is tryptamine + AH2 + O2 = 4-hydroxytryptamine + A + H2O. Its pathway is secondary metabolite biosynthesis. Functionally, tryptamine 4-monooxygenase; part of the gene cluster that mediates the biosynthesis of psilocybin, a psychotropic tryptamine-derived natural product. The first step in the pathway is the decarboxylation of L-tryptophan to tryptamine by the decarboxylase psiD. PsiD does not decarboxylate phenylalanine, tyrosine, or 5-hydroxy- L -tryptophan (5-HTP). 4-hydroxy-L-tryptophan is accepted as substrate by psiD as well. The cytochrome P450 monooxygenase psiH then converts tryptamine to 4-hydroxytryptamine. The kinase psiK catalyzes the 4-O-phosphorylation step by converting 4-hydroxytryptamine into norbaeocystin. The methyltransferase psiM then catalyzes iterative methyl transfer to the amino group of norbaeocystin to yield psilocybin via a monomethylated intermediate, baeocystin. The polypeptide is Tryptamine 4-monooxygenase (Psilocybe cyanescens).